The sequence spans 239 residues: Norbelladine 4'-O-methyltransferase (239 aa).

S-adenosyl-L-methionine contacts are provided by residues Val-55, Glu-77, 79–80, Ser-85, Asp-103, and Ala-132; that span reads GV. Asp-155 contributes to the a divalent metal cation binding site. Residue Asp-157 coordinates S-adenosyl-L-methionine. Residues Asp-181 and Asn-182 each contribute to the a divalent metal cation site.

The protein belongs to the class I-like SAM-binding methyltransferase superfamily. Cation-dependent O-methyltransferase family. It depends on Mg(2+) as a cofactor. As to expression, highly expressed in bulbs. Detected in leaves and inflorescences.

The enzyme catalyses norbelladine + S-adenosyl-L-methionine = 4'-O-methylnorbelladine + S-adenosyl-L-homocysteine + H(+). The protein operates within alkaloid biosynthesis. Its function is as follows. 4'-O-methyltransferase converting norbelladine to 4'-O-methylnorbelladine. 4'-O-methylnorbelladine is a precursor to all Amaryllidaceae alkaloids such as galanthamine, lycorine and haemanthamine, and including haemanthamine- and crinamine-type alkaloids, promising anticancer agents. Can use norbelladine, N-methylnorbelladine and dopamine as substrate, but not caffeic acid, vanillin, 3,4-dihydroxybenzaldehyde and tyramine. This Narcissus aff. pseudonarcissus MK-2014 (Daffodil) protein is Norbelladine 4'-O-methyltransferase.